The following is a 196-amino-acid chain: MSSIKLIVGLANPGAEYAQTRHNAGAWYVDLLAERHNQSLKEESKFFGYTARLNLAGQDIRLLVPATFMNLSGKAVAAMASFYRILPEEILVAHDELDILPGMAKLKLGGGNGGHNGLKDIQNKLGNNPNFYRLRIGIGHPGDKSKVTGFVLGKPPASEQTLIDNAIDESIRCTEVLLNEGMTKAMNRLHAFKASA.

Y17 serves as a coordination point for tRNA. H22 serves as the catalytic Proton acceptor. 3 residues coordinate tRNA: F68, N70, and N116.

Belongs to the PTH family. In terms of assembly, monomer.

It localises to the cytoplasm. It carries out the reaction an N-acyl-L-alpha-aminoacyl-tRNA + H2O = an N-acyl-L-amino acid + a tRNA + H(+). Functionally, hydrolyzes ribosome-free peptidyl-tRNAs (with 1 or more amino acids incorporated), which drop off the ribosome during protein synthesis, or as a result of ribosome stalling. Catalyzes the release of premature peptidyl moieties from peptidyl-tRNA molecules trapped in stalled 50S ribosomal subunits, and thus maintains levels of free tRNAs and 50S ribosomes. In Yersinia pseudotuberculosis serotype O:1b (strain IP 31758), this protein is Peptidyl-tRNA hydrolase.